The chain runs to 313 residues: Protease HtpX homolog (313 aa).

2 helical membrane passes run 7 to 24 and 29 to 46; these read AMLL…GYLI and GMMI…FSYW. His-130 provides a ligand contact to Zn(2+). The active site involves Glu-131. His-134 is a binding site for Zn(2+). A run of 2 helical transmembrane segments spans residues 145 to 165 and 172 to 192; these read ITAT…FFGG and PFGF…AMVV. Glu-201 contacts Zn(2+). The interval 282-313 is disordered; that stretch reads GNAPPASLREDEPGADGPWGRSASRARKGPWS.

This sequence belongs to the peptidase M48B family. Zn(2+) is required as a cofactor.

It localises to the cell inner membrane. This chain is Protease HtpX homolog, found in Chelativorans sp. (strain BNC1).